The following is a 1154-amino-acid chain: Chromosome partition protein Smc (1154 aa).

P32 to N39 contributes to the ATP binding site. Coiled-coil stretches lie at residues V170–A215, L282–E505, and A627–E993.

This sequence belongs to the SMC family. As to quaternary structure, homodimer.

Its subcellular location is the cytoplasm. Required for chromosome condensation and partitioning. In Rhodopseudomonas palustris (strain ATCC BAA-98 / CGA009), this protein is Chromosome partition protein Smc.